The primary structure comprises 216 residues: ATP-dependent Clp protease proteolytic subunit (216 aa).

Ser101 (nucleophile) is an active-site residue. His126 is a catalytic residue.

The protein belongs to the peptidase S14 family. In terms of assembly, component of the chloroplastic Clp protease core complex.

It is found in the plastid. The protein localises to the chloroplast stroma. The enzyme catalyses Hydrolysis of proteins to small peptides in the presence of ATP and magnesium. alpha-casein is the usual test substrate. In the absence of ATP, only oligopeptides shorter than five residues are hydrolyzed (such as succinyl-Leu-Tyr-|-NHMec, and Leu-Tyr-Leu-|-Tyr-Trp, in which cleavage of the -Tyr-|-Leu- and -Tyr-|-Trp bonds also occurs).. Cleaves peptides in various proteins in a process that requires ATP hydrolysis. Has a chymotrypsin-like activity. Plays a major role in the degradation of misfolded proteins. This Triticum aestivum (Wheat) protein is ATP-dependent Clp protease proteolytic subunit.